A 130-amino-acid chain; its full sequence is MMKRAAAAAVGGALAVGAVPVVLSAMGFTGAGIAASSIAAKMMSAAAIANGGGVSAGSLVATLQSVGAAGLSTSSNILLASVGSVLGACLGNSPSSSLPAEPEAKEDEARENVPQGEPPKPPLKSEKHEE.

The next 3 helical transmembrane spans lie at 8–28, 43–63, and 66–86; these read AAVGGALAVGAVPVVLSAMGF, MSAAAIANGGGVSAGSLVATL, and VGAAGLSTSSNILLASVGSVL. The tract at residues 93-130 is disordered; sequence SPSSSLPAEPEAKEDEARENVPQGEPPKPPLKSEKHEE.

Belongs to the IFI6/IFI27 family.

It is found in the mitochondrion membrane. Functionally, plays a role in the apoptotic process and has a pro-apoptotic activity. This chain is Interferon alpha-inducible protein 27-like protein 2, found in Homo sapiens (Human).